We begin with the raw amino-acid sequence, 1790 residues long: Intracellular protein transport protein USO1 (1790 aa).

Residues 1-724 (MDIIQGLIQQ…LSHDPDEEPI (724 aa)) form a globular head region. ARM repeat units lie at residues 45–89 (AFSR…LFIR), 127–170 (QFSL…AVMA), 173–213 (PLKA…MAVV), 215–260 (DSPH…NILK), 261–312 (YNTS…VSLT), 314–362 (EPGN…NMVR), 363–429 (SNEH…LKAY), 431–512 (MDNF…PFKL), 543–584 (GNDL…LIYW), and 586–630 (FGDF…LGVA). The interval 452–484 (TNNVGDNAKENGGSNKSDKESDSDKDTDGKDGT) is disordered. A charged (hyper-hydrophilic) region spans residues 465-487 (SNKSDKESDSDKDTDGKDGTEYE). A compositionally biased stretch (basic and acidic residues) spans 467–484 (KSDKESDSDKDTDGKDGT). A coiled-coil region spans residues 725-1790 (NKISFEEVEK…EEDEEEGQVA (1066 aa)). A dispensable for the protein function region spans residues 991–1790 (ESSIQLSNLQ…EEDEEEGQVA (800 aa)). 6 disordered regions span residues 1185–1221 (EITS…SNLK), 1326–1351 (KEKS…EEQL), 1485–1547 (GLKK…EDIK), 1645–1667 (QELD…EVRK), 1722–1742 (DNLK…SEID), and 1762–1790 (LKDL…GQVA). Residues 1194-1209 (ESIKKKNDELEGEVKA) are compositionally biased toward basic and acidic residues. Composition is skewed to basic and acidic residues over residues 1485–1512 (GLKK…KLES), 1519–1547 (TELK…EDIK), 1655–1667 (QKSE…EVRK), and 1722–1738 (DNLK…NEDR). Position 1770 is a phosphoserine (Ser-1770). The segment covering 1770 to 1790 (SSDEEDDEEDDEEDEEEGQVA) has biased composition (acidic residues).

It belongs to the VDP/USO1/EDE1 family. Homodimer. Dimerizes by parallel association of the tails, resulting in an elongated structure with two globular head domains side by side, and a long rod-like tail structure.

The protein localises to the cytoplasm. It localises to the cytoskeleton. Its subcellular location is the cytoplasmic vesicle membrane. It is found in the endoplasmic reticulum membrane. The protein resides in the golgi apparatus membrane. Required for protein transport from the ER to the Golgi complex. The sequence is that of Intracellular protein transport protein USO1 (USO1) from Saccharomyces cerevisiae (strain ATCC 204508 / S288c) (Baker's yeast).